The chain runs to 92 residues: Phospholemman (92 aa).

A signal peptide spans 1–20; that stretch reads MASPGHILIVCVCLLSMASA. Over 21–35 the chain is Extracellular; that stretch reads EAPQEPDPFTYDYHT. The helical transmembrane segment at 36–56 threads the bilayer; it reads LRIGGLTIAGILFILGILIIL. The Cytoplasmic portion of the chain corresponds to 57–92; sequence SKRCRCKFNQQQRTGEPDEEEGTFRSSIRRLSTRRR. Residue Cys60 is the site of S-palmitoyl cysteine attachment. An S-glutathionyl cysteine; alternate modification is found at Cys62. The S-palmitoyl cysteine; alternate moiety is linked to residue Cys62. The interval 66–92 is disordered; that stretch reads QQQRTGEPDEEEGTFRSSIRRLSTRRR. A Phosphothreonine modification is found at Thr79. Ser82 is modified (phosphoserine). The residue at position 83 (Ser83) is a Phosphoserine; by PKA and PKC. Positions 83 to 92 are enriched in basic residues; the sequence is SIRRLSTRRR. Ser88 is modified (phosphoserine; by PKA). Residue Thr89 is modified to Phosphothreonine; by PKC.

The protein belongs to the FXYD family. Homotetramer. Monomer. Regulatory subunit of the sodium/potassium-transporting ATPase (NKA) which is composed of a catalytic alpha subunit, a non-catalytic beta subunit and an additional regulatory subunit. The monomeric form associates with NKA while the oligomeric form does not. Interacts with the catalytic alpha-1 subunit ATP1A1. Also interacts with the catalytic alpha-2 and alpha-3 subunits ATP1A2 and ATP1A3. Very little interaction with ATP1A1, ATP1A2 or ATP1A3 when phosphorylated at Ser-83. Interacts with the non-catalytic beta-1 subunit ATP1B1. Oxidative stress decreases interaction with ATP1A1 but increases interaction with ATP1B1. Post-translationally, major plasma membrane substrate for cAMP-dependent protein kinase (PKA) and protein kinase C (PKC) in several different tissues. Phosphorylated in response to insulin and adrenergic stimulation. Phosphorylation at Ser-88 stimulates sodium/potassium-transporting ATPase activity while the unphosphorylated form inhibits sodium/potassium-transporting ATPase activity. Phosphorylation increases tetramerization, decreases binding to ATP1A1 and reduces inhibition of ATP1A1 activity. Phosphorylation at Ser-83 leads to greatly reduced interaction with ATP1A1, ATP1A2 and ATP1A3. May be phosphorylated by DMPK. In terms of processing, palmitoylation increases half-life and stability and is enhanced upon phosphorylation at Ser-88 by PKA. As to expression, in adult brain, highest levels are found in the cerebellum and in the lateral, third and fourth ventricles of the choroid plexus (at protein level). Also detected in cells of a portion of the ependymal lining of the lateral ventricle on its rostral surface posterior to the caudate putamen (at protein level). Expressed in a subset of neurons which secrete gonadotropin-releasing hormone.

The protein localises to the cell membrane. The protein resides in the sarcolemma. Its subcellular location is the apical cell membrane. It is found in the membrane. It localises to the caveola. The protein localises to the T-tubule. Its function is as follows. Associates with and regulates the activity of the sodium/potassium-transporting ATPase (NKA) which transports Na(+) out of the cell and K(+) into the cell. Inhibits NKA activity in its unphosphorylated state and stimulates activity when phosphorylated. Reduces glutathionylation of the NKA beta-1 subunit ATP1B1, thus reversing glutathionylation-mediated inhibition of ATP1B1. Contributes to female sexual development by maintaining the excitability of neurons which secrete gonadotropin-releasing hormone. The chain is Phospholemman from Rattus norvegicus (Rat).